The following is a 313-amino-acid chain: Fructose-1,6-bisphosphatase class 1 (313 aa).

Mg(2+) is bound by residues E91, D112, L114, and D115. Residues 115–118, Y223, and K254 contribute to the substrate site; that span reads DGSS. E260 is a Mg(2+) binding site.

The protein belongs to the FBPase class 1 family. Homotetramer. The cofactor is Mg(2+).

The protein localises to the cytoplasm. The catalysed reaction is beta-D-fructose 1,6-bisphosphate + H2O = beta-D-fructose 6-phosphate + phosphate. It participates in carbohydrate biosynthesis; gluconeogenesis. The chain is Fructose-1,6-bisphosphatase class 1 from Geobacter sulfurreducens (strain ATCC 51573 / DSM 12127 / PCA).